Reading from the N-terminus, the 53-residue chain is uncharacterized protein (53 aa).

This sequence belongs to the ELIP/psbS family.

Its subcellular location is the plastid. It localises to the chloroplast. Possible role in chlorophyll and/or carotenoid binding. This is an uncharacterized protein from Guillardia theta (Cryptophyte).